The chain runs to 852 residues: G-type lectin S-receptor-like serine/threonine-protein kinase At4g03230 (852 aa).

Residues 1 to 19 (MILSVFFYMFLLHIRRLDC) form the signal peptide. The Bulb-type lectin domain occupies 20–154 (FVAVQDSKTL…GNEANVVWQS (135 aa)). Over 20-444 (FVAVQDSKTL…RGRGRYGEAK (425 aa)) the chain is Extracellular. N-linked (GlcNAc...) asparagine glycans are attached at residues Asn-37, Asn-59, Asn-171, Asn-187, Asn-234, and Asn-243. In terms of domain architecture, EGF-like spans 285 to 321 (PRDECSVYNACGNFGSCNSKNEEMCKCLPGFRPNFLE). 2 disulfides stabilise this stretch: Cys-289–Cys-301 and Cys-295–Cys-309. In terms of domain architecture, PAN spans 339–426 (CGKDGVVVGD…SRNVFIRVAV (88 aa)). A glycan (N-linked (GlcNAc...) asparagine) is linked at Asn-352. 2 disulfides stabilise this stretch: Cys-373-Cys-400 and Cys-377-Cys-383. The helical transmembrane segment at 445 to 465 (TPVVLIIVVTFTSAAILVVLS) threads the bilayer. Over 466-852 (STASYVFLQR…ELTITLEDGR (387 aa)) the chain is Cytoplasmic. Residues 532 to 819 (FSNANKLGQG…TLPTPKQPAF (288 aa)) form the Protein kinase domain. Residues 538-546 (LGQGGFGPV) and Lys-560 each bind ATP. Ser-566 is modified (phosphoserine). A caM-binding region spans residues 621–638 (KLCQRLDWKMRCNIILGI). Catalysis depends on Asp-657, which acts as the Proton acceptor. Phosphoserine occurs at positions 661 and 674. Thr-691 bears the Phosphothreonine mark. The interval 826–852 (SSSKASSSTKPETCSENELTITLEDGR) is disordered. A phosphoserine mark is found at Ser-831 and Ser-840. A compositionally biased stretch (polar residues) spans 834–845 (TKPETCSENELT). The residue at position 847 (Thr-847) is a Phosphothreonine.

It belongs to the protein kinase superfamily. Ser/Thr protein kinase family.

Its subcellular location is the cell membrane. It catalyses the reaction L-seryl-[protein] + ATP = O-phospho-L-seryl-[protein] + ADP + H(+). The enzyme catalyses L-threonyl-[protein] + ATP = O-phospho-L-threonyl-[protein] + ADP + H(+). The chain is G-type lectin S-receptor-like serine/threonine-protein kinase At4g03230 from Arabidopsis thaliana (Mouse-ear cress).